A 283-amino-acid polypeptide reads, in one-letter code: Cuticle collagen 49 (283 aa).

Positions 1 to 19 are cleaved as a signal peptide; the sequence is MWKFVIGSVSTAAFFVSVC. The disordered stretch occupies residues 90–283; it reads EPTKNCPAGP…GYCTCPPRTA (194 aa). The segment covering 127–139 has biased composition (basic and acidic residues); sequence VVIHDMPNPKECI. Positions 143–155 are enriched in pro residues; sequence AGPPGPPGPPGPL. A compositionally biased stretch (low complexity) spans 185 to 204; that stretch reads QGPPGSAGRAGPRGQAGQPG. In terms of domain architecture, Collagen-like spans 213–271; it reads GRPGPQGPLGEPGAQGEPGVDGKDGALGAPGRKAENGRPGKRGKDGVAGVPGTRGKEGE. Basic and acidic residues predominate over residues 244–257; it reads RKAENGRPGKRGKD.

This sequence belongs to the cuticular collagen family. As to quaternary structure, collagen polypeptide chains are complexed within the cuticle by disulfide bonds and other types of covalent cross-links.

Its function is as follows. Probable cuticular collagen-like protein. Nematode cuticles are composed largely of collagen-like proteins. The cuticle functions both as an exoskeleton and as a barrier to protect the worm from its environment. Acts downstream of the Wnt signaling pathway, perhaps in the formation of the adult cuticle. The sequence is that of Cuticle collagen 49 from Caenorhabditis elegans.